The primary structure comprises 146 residues: Snaclec mamushigin subunit beta (146 aa).

The N-terminal stretch at 1–23 (MGRFIFLSFGLLVVFVSLSGTGA) is a signal peptide. Cystine bridges form between Cys25–Cys36, Cys53–Cys142, and Cys119–Cys134. The C-type lectin domain occupies 32-143 (YEGHCYRVFQ…CSRTYNVVCK (112 aa)).

As to quaternary structure, heterodimer of subunits alpha and beta; disulfide-linked. In terms of tissue distribution, expressed by the venom gland.

The protein localises to the secreted. In terms of biological role, binds to platelet GPIbalpha (GP1BA) and enhances platelet aggregation at low-shear stress. At high-shear stress, blocks platelet aggregation in a dose-dependent manner. The sequence is that of Snaclec mamushigin subunit beta from Gloydius blomhoffii (Mamushi).